Here is a 559-residue protein sequence, read N- to C-terminus: Malate synthase, glyoxysomal (559 aa).

The Proton acceptor role is filled by Arg-173. Asp-459 acts as the Proton donor in catalysis. A Microbody targeting signal motif is present at residues 557-559 (CKL).

The protein belongs to the malate synthase family.

It localises to the glyoxysome. It carries out the reaction glyoxylate + acetyl-CoA + H2O = (S)-malate + CoA + H(+). Its pathway is carbohydrate metabolism; glyoxylate cycle; (S)-malate from isocitrate: step 2/2. The sequence is that of Malate synthase, glyoxysomal (LIP) from Zea mays (Maize).